The primary structure comprises 1003 residues: Trifunctional purine biosynthetic protein adenosine-3 (1003 aa).

Residues 111-318 (KSFLDRHGIP…LYEVMQAVIN (208 aa)) form the ATP-grasp domain. ATP is bound by residues 190–193 (EELL), Glu-197, Arg-220, and Asn-229. The disordered stretch occupies residues 214-235 (PAQDHKRLKDGDEGPNTGGMGA). Positions 216-225 (QDHKRLKDGD) are enriched in basic and acidic residues. 2 residues coordinate Mg(2+): Glu-288 and Asn-290. An AIRS domain region spans residues 434 to 805 (GLTYKNSGVD…QGKIQTNKVK (372 aa)). The GART domain stretch occupies residues 806–1003 (VAVLISGTGT…VGEAGKICWK (198 aa)). 814–816 (GTN) is a N(1)-(5-phospho-beta-D-ribosyl)glycinamide binding site. Residues Arg-867, 892 to 895 (MRIL), and Asn-909 contribute to the (6R)-10-formyltetrahydrofolate site. The active-site Proton donor is His-911. Position 943–947 (943–947 (AEEVD)) interacts with (6R)-10-formyltetrahydrofolate. 973-976 (KEAE) is a binding site for N(1)-(5-phospho-beta-D-ribosyl)glycinamide.

In the N-terminal section; belongs to the GARS family. The protein in the central section; belongs to the AIR synthase family. It in the C-terminal section; belongs to the GART family. As to quaternary structure, homodimer. Mg(2+) serves as cofactor. Mn(2+) is required as a cofactor.

The enzyme catalyses 5-phospho-beta-D-ribosylamine + glycine + ATP = N(1)-(5-phospho-beta-D-ribosyl)glycinamide + ADP + phosphate + H(+). It carries out the reaction 2-formamido-N(1)-(5-O-phospho-beta-D-ribosyl)acetamidine + ATP = 5-amino-1-(5-phospho-beta-D-ribosyl)imidazole + ADP + phosphate + H(+). The catalysed reaction is N(1)-(5-phospho-beta-D-ribosyl)glycinamide + (6R)-10-formyltetrahydrofolate = N(2)-formyl-N(1)-(5-phospho-beta-D-ribosyl)glycinamide + (6S)-5,6,7,8-tetrahydrofolate + H(+). The protein operates within purine metabolism; IMP biosynthesis via de novo pathway; 5-amino-1-(5-phospho-D-ribosyl)imidazole from N(2)-formyl-N(1)-(5-phospho-D-ribosyl)glycinamide: step 2/2. It functions in the pathway purine metabolism; IMP biosynthesis via de novo pathway; N(1)-(5-phospho-D-ribosyl)glycinamide from 5-phospho-alpha-D-ribose 1-diphosphate: step 2/2. Its pathway is purine metabolism; IMP biosynthesis via de novo pathway; N(2)-formyl-N(1)-(5-phospho-D-ribosyl)glycinamide from N(1)-(5-phospho-D-ribosyl)glycinamide (10-formyl THF route): step 1/1. Trifunctional enzyme that catalyzes three distinct reactions as part of the 'de novo' inosine monophosphate biosynthetic pathway. In Gallus gallus (Chicken), this protein is Trifunctional purine biosynthetic protein adenosine-3 (GART).